The sequence spans 104 residues: N(4)-acetylcytidine amidohydrolase (104 aa).

An ASCH domain is found at 7–95 (MTFFERFETD…IQDIYPGISQ (89 aa)). Residue lysine 22 is the Proton acceptor of the active site. The active-site Nucleophile is the threonine 25. Glutamate 75 (proton donor) is an active-site residue.

This sequence belongs to the N(4)-acetylcytidine amidohydrolase family.

The enzyme catalyses N(4)-acetylcytidine + H2O = cytidine + acetate + H(+). The catalysed reaction is N(4)-acetyl-2'-deoxycytidine + H2O = 2'-deoxycytidine + acetate + H(+). It catalyses the reaction N(4)-acetylcytosine + H2O = cytosine + acetate + H(+). Its function is as follows. Catalyzes the hydrolysis of N(4)-acetylcytidine (ac4C). The sequence is that of N(4)-acetylcytidine amidohydrolase from Vibrio atlanticus (strain LGP32) (Vibrio splendidus (strain Mel32)).